A 208-amino-acid chain; its full sequence is ATP-dependent Clp protease proteolytic subunit (208 aa).

The active-site Nucleophile is the serine 105. Residue histidine 130 is part of the active site.

The protein belongs to the peptidase S14 family. As to quaternary structure, fourteen ClpP subunits assemble into 2 heptameric rings which stack back to back to give a disk-like structure with a central cavity, resembling the structure of eukaryotic proteasomes.

The protein localises to the cytoplasm. The enzyme catalyses Hydrolysis of proteins to small peptides in the presence of ATP and magnesium. alpha-casein is the usual test substrate. In the absence of ATP, only oligopeptides shorter than five residues are hydrolyzed (such as succinyl-Leu-Tyr-|-NHMec, and Leu-Tyr-Leu-|-Tyr-Trp, in which cleavage of the -Tyr-|-Leu- and -Tyr-|-Trp bonds also occurs).. Cleaves peptides in various proteins in a process that requires ATP hydrolysis. Has a chymotrypsin-like activity. Plays a major role in the degradation of misfolded proteins. The polypeptide is ATP-dependent Clp protease proteolytic subunit (Xanthomonas campestris pv. campestris (strain 8004)).